The following is an 868-amino-acid chain: Rifampicin phosphotransferase (868 aa).

Residues 1 to 313 (MSSFVLDFQE…IYIVQSRPIT (313 aa)) are ATP-binding. Lys-22, Arg-116, Gly-131, Thr-135, Gln-182, Glu-296, Gln-308, and Arg-310 together coordinate ATP. Residues 326 to 756 (NHVYISVGHQ…TSDGEIITGK (431 aa)) are rifampicin-binding. A swivel phosphohistidine region spans residues 769–867 (GLPVSSGVVE…VHGTEGYIEV (99 aa)). His-827 serves as the catalytic Tele-phosphohistidine intermediate.

It belongs to the rifampicin phosphotransferase family.

It catalyses the reaction rifampicin + ATP + H2O = 21-phosphorifampicin + AMP + phosphate + 2 H(+). Its function is as follows. Catalyzes the phosphorylation of rifampicin, also known as rifampin (RIF), leading to its inactivation. Confers high level resistance to a variety of clinically used rifamycin antibiotics. Does not show phosphoenolpyruvate (PEP) synthase activity. This chain is Rifampicin phosphotransferase, found in Bacillus cereus (strain ATCC 14579 / DSM 31 / CCUG 7414 / JCM 2152 / NBRC 15305 / NCIMB 9373 / NCTC 2599 / NRRL B-3711).